The following is an 884-amino-acid chain: Lon protease homolog 2, peroxisomal (884 aa).

Positions 12 to 255 (LAILPFRNKV…KATELVDRHL (244 aa)) constitute a Lon N-terminal domain. The disordered stretch occupies residues 67–101 (SLLSPGVGSDSGEGGSKAPGGSAGESTKQDTKNGK). Residues 75–89 (SDSGEGGSKAPGGSA) are compositionally biased toward gly residues. 408 to 415 (GPPGVGKT) contacts ATP. The 186-residue stretch at 689–874 (VASPGVSVGL…EEVLDHAFEG (186 aa)) folds into the Lon proteolytic domain. Active-site residues include Ser780 and Lys823. Residues 882 to 884 (SKL) carry the Microbody targeting signal motif.

The protein belongs to the peptidase S16 family. Expressed in roots, leaves and panicles.

It localises to the peroxisome matrix. It carries out the reaction Hydrolysis of proteins in presence of ATP.. Its function is as follows. ATP-dependent serine protease that mediates the selective degradation of misfolded and unassembled polypeptides in the peroxisomal matrix. Necessary for type 2 peroxisome targeting signal (PTS2)-containing protein processing and facilitates peroxisome matrix protein import. The protein is Lon protease homolog 2, peroxisomal (LON1) of Oryza sativa subsp. indica (Rice).